Reading from the N-terminus, the 81-residue chain is Conotoxin Lt6.4 (81 aa).

Positions 1-19 (MKLVLAIVLILMFLSLSAG) are cleaved as a signal peptide. The propeptide occupies 20–42 (AETSDNGVSRGGHRPQYWPVTPP). 3 disulfides stabilise this stretch: Cys-46–Cys-60, Cys-53–Cys-65, and Cys-59–Cys-80.

The protein belongs to the conotoxin I3 superfamily. As to expression, expressed by the venom duct.

The protein resides in the secreted. This chain is Conotoxin Lt6.4, found in Conus litteratus (Lettered cone).